Here is a 343-residue protein sequence, read N- to C-terminus: MDNRSNALNAALSQIERQFGKGSVMRLGDPGLIPDIDVISTGSLGLDIALGVGGLPRGRIIEIYGPEASGKTTLALQTIASCQRMGGTAAFVDAEHALDAIYAGKLGVKVEDLLVSQPDTGEQALEITDMLVRSGAVDLIVIDSVAALTPKAEIEGDMGDSHMGLQARLMSQALRKLTANIKKSNTLVIFINQIRMKIGVMFGNPETTTGGNALKFYSSVRLDIRRIGAIKKGEEILGSETRVKVVKNKVAPPFRQVEFDILYGLGISRESELIDLGVKNELVEKAGAWYSYNGERIGQGKENVRQFFLENPKIAGEIETRLREKLLPHRQGEKIAEEVNAAE.

It belongs to the RecA family.

It localises to the cytoplasm. In terms of biological role, can catalyze the hydrolysis of ATP in the presence of single-stranded DNA, the ATP-dependent uptake of single-stranded DNA by duplex DNA, and the ATP-dependent hybridization of homologous single-stranded DNAs. It interacts with LexA causing its activation and leading to its autocatalytic cleavage. In Coxiella burnetii (strain RSA 493 / Nine Mile phase I), this protein is Protein RecA.